The chain runs to 136 residues: Large ribosomal subunit protein uL16 (136 aa).

It belongs to the universal ribosomal protein uL16 family. In terms of assembly, part of the 50S ribosomal subunit.

Functionally, binds 23S rRNA and is also seen to make contacts with the A and possibly P site tRNAs. This Ehrlichia canis (strain Jake) protein is Large ribosomal subunit protein uL16.